Here is a 153-residue protein sequence, read N- to C-terminus: 6,7-dimethyl-8-ribityllumazine synthase (153 aa).

5-amino-6-(D-ribitylamino)uracil contacts are provided by residues Phe22, 56 to 58 (AFE), and 80 to 82 (AVI). 85–86 (ST) contributes to the (2S)-2-hydroxy-3-oxobutyl phosphate binding site. The Proton donor role is filled by His88. Residue Phe113 participates in 5-amino-6-(D-ribitylamino)uracil binding. Residue Arg127 participates in (2S)-2-hydroxy-3-oxobutyl phosphate binding.

This sequence belongs to the DMRL synthase family.

The enzyme catalyses (2S)-2-hydroxy-3-oxobutyl phosphate + 5-amino-6-(D-ribitylamino)uracil = 6,7-dimethyl-8-(1-D-ribityl)lumazine + phosphate + 2 H2O + H(+). It participates in cofactor biosynthesis; riboflavin biosynthesis; riboflavin from 2-hydroxy-3-oxobutyl phosphate and 5-amino-6-(D-ribitylamino)uracil: step 1/2. Functionally, catalyzes the formation of 6,7-dimethyl-8-ribityllumazine by condensation of 5-amino-6-(D-ribitylamino)uracil with 3,4-dihydroxy-2-butanone 4-phosphate. This is the penultimate step in the biosynthesis of riboflavin. The sequence is that of 6,7-dimethyl-8-ribityllumazine synthase from Fusobacterium nucleatum subsp. nucleatum (strain ATCC 25586 / DSM 15643 / BCRC 10681 / CIP 101130 / JCM 8532 / KCTC 2640 / LMG 13131 / VPI 4355).